Consider the following 330-residue polypeptide: Mas-related G-protein coupled receptor member X2 (330 aa).

Over Met-1–Leu-33 the chain is Extracellular. A helical membrane pass occupies residues Val-34–Leu-54. Topologically, residues Leu-55–Ala-63 are cytoplasmic. The helical transmembrane segment at Phe-64 to Ile-84 threads the bilayer. Residues Asn-85 to Ser-96 are Extracellular-facing. The helical transmembrane segment at Ile-97–Leu-117 threads the bilayer. Topologically, residues Ser-118–His-144 are cytoplasmic. The chain crosses the membrane as a helical span at residues Leu-145 to Gly-165. The Extracellular portion of the chain corresponds to Lys-166–Asp-184. Residues Phe-185–Leu-205 form a helical membrane-spanning segment. Residues Leu-206–Thr-228 lie on the Cytoplasmic side of the membrane. The helical transmembrane segment at Val-229–Ile-249 threads the bilayer. At Trp-250–Ser-264 the chain is on the extracellular side. The chain crosses the membrane as a helical span at residues Val-265–Phe-285. The Cytoplasmic portion of the chain corresponds to Arg-286–Val-330.

This sequence belongs to the G-protein coupled receptor 1 family. Mas subfamily.

Its subcellular location is the cell membrane. Functionally, mast cell-specific receptor for basic secretagogues, i.e. cationic amphiphilic drugs, as well as endo- or exogenous peptides, consisting of a basic head group and a hydrophobic core. Recognizes and binds small molecules containing a cyclized tetrahydroisoquinoline (THIQ), such as non-steroidal neuromuscular blocking drugs (NMBDs), including tubocurarine and atracurium. In response to these compounds, mediates pseudo-allergic reactions characterized by histamine release, inflammation and airway contraction. The chain is Mas-related G-protein coupled receptor member X2 (MRGPRX2) from Rhinopithecus bieti (Black snub-nosed monkey).